A 255-amino-acid chain; its full sequence is Indole-3-glycerol phosphate synthase (255 aa).

It belongs to the TrpC family.

It carries out the reaction 1-(2-carboxyphenylamino)-1-deoxy-D-ribulose 5-phosphate + H(+) = (1S,2R)-1-C-(indol-3-yl)glycerol 3-phosphate + CO2 + H2O. It functions in the pathway amino-acid biosynthesis; L-tryptophan biosynthesis; L-tryptophan from chorismate: step 4/5. This is Indole-3-glycerol phosphate synthase from Streptococcus sanguinis (strain SK36).